Consider the following 384-residue polypeptide: 8-amino-7-oxononanoate synthase (384 aa).

Arg-23 lines the substrate pocket. 110-111 is a binding site for pyridoxal 5'-phosphate; it reads GF. Residue His-135 coordinates substrate. Ser-179, His-206, and Thr-232 together coordinate pyridoxal 5'-phosphate. Residue Lys-235 is modified to N6-(pyridoxal phosphate)lysine. Thr-348 is a binding site for substrate.

It belongs to the class-II pyridoxal-phosphate-dependent aminotransferase family. BioF subfamily. In terms of assembly, homodimer. Pyridoxal 5'-phosphate is required as a cofactor.

It carries out the reaction 6-carboxyhexanoyl-[ACP] + L-alanine + H(+) = (8S)-8-amino-7-oxononanoate + holo-[ACP] + CO2. It participates in cofactor biosynthesis; biotin biosynthesis. In terms of biological role, catalyzes the decarboxylative condensation of pimeloyl-[acyl-carrier protein] and L-alanine to produce 8-amino-7-oxononanoate (AON), [acyl-carrier protein], and carbon dioxide. The sequence is that of 8-amino-7-oxononanoate synthase from Vibrio cholerae serotype O1 (strain ATCC 39315 / El Tor Inaba N16961).